Here is a 1263-residue protein sequence, read N- to C-terminus: Multidrug resistance protein sirA (1263 aa).

The tract at residues 1-21 is disordered; sequence MAEPESEKPSSAQGGGLPSSD. Transmembrane regions (helical) follow at residues 57-77, 104-124, 179-199, and 206-226; these read LISA…ILFI, IALY…IFTN, KIGL…IGFV, and FILT…SGFM. The ABC transmembrane type-1 1 domain maps to 57–347; the sequence is LISAFFAAVS…VGPHLQAMSL (291 aa). N232 carries N-linked (GlcNAc...) asparagine glycosylation. Transmembrane regions (helical) follow at residues 284–304 and 318–338; these read VMGW…GLAI and VGAI…FGNV. The 246-residue stretch at 380–625 folds into the ABC transporter 1 domain; the sequence is IEFRNVSHVY…EGLYQTFVRR (246 aa). N-linked (GlcNAc...) asparagine glycosylation is present at N384. 415–422 lines the ATP pocket; sequence GASGSGKS. An N-linked (GlcNAc...) asparagine glycan is attached at N469. The tract at residues 635–672 is disordered; sequence PPHARITPAVDTPASPQHRLSEKTGSIYGQGESEAADK. Transmembrane regions (helical) follow at residues 699–719, 740–760, 817–839, 843–865, 930–950, and 960–980; these read VTGI…SVFF, FWAA…GVQG, VFLG…SLAV, LTLV…LKLV, LSEA…ATLV, and FFIV…VFAF. The ABC transmembrane type-1 2 domain maps to 699-986; it reads VTGIASAVIS…VFAFAPDFGK (288 aa). Positions 1021–1259 constitute an ABC transporter 2 domain; the sequence is VDVSNVVFYY…RGSYYDSVNL (239 aa). 1056–1063 serves as a coordination point for ATP; sequence GGSGSGKS.

This sequence belongs to the ABC transporter superfamily. ABCB family. Multidrug resistance exporter (TC 3.A.1.201) subfamily.

Its subcellular location is the cell membrane. It catalyses the reaction ATP + H2O + xenobioticSide 1 = ADP + phosphate + xenobioticSide 2.. In terms of biological role, sirodesmin transporter that provides the dual role of sirodesmin export and self-protection. Also provides tolerance to gliotoxin. In Leptosphaeria maculans (Blackleg fungus), this protein is Multidrug resistance protein sirA.